The sequence spans 850 residues: Pierisin (850 aa).

Ricin B-type lectin domains are found at residues 267–409 (GEFM…WNII), 413–560 (FRPI…WDIK), and 564–707 (YQYV…WYLK).

The protein belongs to the pierisin ADP-ribosyltransferase family.

It carries out the reaction a 2'-deoxyguanosine in DNA + NAD(+) = an N(2)-(ADP-L-ribosyl)-2'-deoxyguanosine in DNA + nicotinamide + H(+). ADP-ribosylates double-stranded DNA by targeting the N2 amino group of dG residues. Induces apoptosis in a range of human cell lines. May play a role in destroying cells during pupation and/or defense against parasites. The protein is Pierisin of Pieris brassicae (White butterfly).